The primary structure comprises 257 residues: Small ribosomal subunit protein uS2 (257 aa).

Residues glutamine 229–glutamate 257 are disordered.

It belongs to the universal ribosomal protein uS2 family.

The chain is Small ribosomal subunit protein uS2 from Caldicellulosiruptor bescii (strain ATCC BAA-1888 / DSM 6725 / KCTC 15123 / Z-1320) (Anaerocellum thermophilum).